Consider the following 431-residue polypeptide: MKNWRTFILGLALCANGALAAPQVVDKVAAVVDNGIVLESEVDNMLSTVKHGAQEANQQLPDDTTLRRQILDRLIMDNIILQLAQRTNITISDEQLDQAIGNIAAQNHMSLDQLRSRLPYDGIDYNTYRTQIRKEMLIAEVRNGEVRRRVTILPQEVESLAQQIAAQTGNGAEFNLSHILIPLPENPTQDQLDKAEELATSIVEQSKSGADFGKLAITYSADAQALKGGQMGWGKLEELPSLFAARLQGAQKGSIVGPIRSGVGFHILKVNDIRGGDQKVAVTEVHARHIMLRTSVVMTDQQARAKLEDIAAQIKSGRISFAAAAKQLSEDPGSANQGGDLGWSSADAFDPAFRNALMHLKKGEISTPVHSSFGWHLIQLIDTRQVDRTDAAQKDRAYRLLFNRKFAEEAQTWMQEQRASAYVKILDSNGQ.

The first 20 residues, 1–20 (MKNWRTFILGLALCANGALA), serve as a signal peptide directing secretion. PpiC domains follow at residues 171 to 272 (GAEF…KVND) and 282 to 382 (VTEV…QLID).

The protein localises to the periplasm. The catalysed reaction is [protein]-peptidylproline (omega=180) = [protein]-peptidylproline (omega=0). Functionally, chaperone involved in the correct folding and assembly of outer membrane proteins. Recognizes specific patterns of aromatic residues and the orientation of their side chains, which are found more frequently in integral outer membrane proteins. May act in both early periplasmic and late outer membrane-associated steps of protein maturation. The polypeptide is Chaperone SurA (Sodalis glossinidius (strain morsitans)).